The following is a 388-amino-acid chain: S-adenosylmethionine synthase (388 aa).

Histidine 16 contributes to the ATP binding site. Aspartate 18 is a binding site for Mg(2+). Residue glutamate 44 participates in K(+) binding. Residues glutamate 57 and glutamine 100 each contribute to the L-methionine site. The segment at 100–110 is flexible loop; it reads QSPEIAQGVDR. ATP contacts are provided by residues 165–167, 231–232, aspartate 240, 246–247, alanine 263, and lysine 267; these read DAK, KF, and RK. L-methionine is bound at residue aspartate 240. Residue lysine 271 participates in L-methionine binding.

The protein belongs to the AdoMet synthase family. Homotetramer; dimer of dimers. Requires Mg(2+) as cofactor. K(+) is required as a cofactor.

The protein resides in the cytoplasm. It catalyses the reaction L-methionine + ATP + H2O = S-adenosyl-L-methionine + phosphate + diphosphate. Its pathway is amino-acid biosynthesis; S-adenosyl-L-methionine biosynthesis; S-adenosyl-L-methionine from L-methionine: step 1/1. Catalyzes the formation of S-adenosylmethionine (AdoMet) from methionine and ATP. The overall synthetic reaction is composed of two sequential steps, AdoMet formation and the subsequent tripolyphosphate hydrolysis which occurs prior to release of AdoMet from the enzyme. The protein is S-adenosylmethionine synthase of Psychrobacter sp. (strain PRwf-1).